Here is a 158-residue protein sequence, read N- to C-terminus: Protein Smg homolog (158 aa).

It belongs to the Smg family.

The chain is Protein Smg homolog from Coxiella burnetii (strain Dugway 5J108-111).